Consider the following 208-residue polypeptide: Regulator of G-protein signaling 4 (208 aa).

Residues cysteine 2, cysteine 12, and cysteine 95 are each lipidated (S-palmitoyl cysteine). An RGS domain is found at 62–178 (SLENLIHHDR…LKSPYLDLVS (117 aa)).

Post-translationally, palmitoylated on Cys-2 and/or Cys-12. In terms of processing, phosphorylated by cyclic GMP-dependent protein kinase. As to expression, expressed in the developing nervous system.

In terms of biological role, inhibits signal transduction by increasing the GTPase activity of G protein alpha subunits thereby driving them into their inactive GDP-bound form. Activity on G(z)-alpha is inhibited by phosphorylation of the G-protein. Activity on G(z)-alpha and G(i)-alpha-1 is inhibited by palmitoylation of the G-protein. In Gallus gallus (Chicken), this protein is Regulator of G-protein signaling 4 (RGS4).